A 155-amino-acid chain; its full sequence is Cyanate hydratase (155 aa).

Residues arginine 95, glutamate 98, and serine 121 contribute to the active site.

Belongs to the cyanase family.

The catalysed reaction is cyanate + hydrogencarbonate + 3 H(+) = NH4(+) + 2 CO2. Catalyzes the reaction of cyanate with bicarbonate to produce ammonia and carbon dioxide. In Pseudomonas syringae pv. tomato (strain ATCC BAA-871 / DC3000), this protein is Cyanate hydratase.